A 205-amino-acid chain; its full sequence is Adenylyl-sulfate kinase (205 aa).

31 to 38 is a binding site for ATP; that stretch reads GLSGSGKS. Ser-105 serves as the catalytic Phosphoserine intermediate.

The protein belongs to the APS kinase family.

It catalyses the reaction adenosine 5'-phosphosulfate + ATP = 3'-phosphoadenylyl sulfate + ADP + H(+). It participates in sulfur metabolism; hydrogen sulfide biosynthesis; sulfite from sulfate: step 2/3. Its function is as follows. Catalyzes the synthesis of activated sulfate. This Shewanella halifaxensis (strain HAW-EB4) protein is Adenylyl-sulfate kinase.